We begin with the raw amino-acid sequence, 328 residues long: Malate dehydrogenase (328 aa).

Residue 12-18 participates in NAD(+) binding; sequence GAAGQIA. Residues Arg93 and Arg99 each coordinate substrate. Residues Asn106, Gln113, and 130–132 contribute to the NAD(+) site; that span reads VGN. Residues Asn132 and Arg163 each coordinate substrate. His188 functions as the Proton acceptor in the catalytic mechanism.

This sequence belongs to the LDH/MDH superfamily. MDH type 2 family.

It carries out the reaction (S)-malate + NAD(+) = oxaloacetate + NADH + H(+). In terms of biological role, catalyzes the reversible oxidation of malate to oxaloacetate. This Burkholderia lata (strain ATCC 17760 / DSM 23089 / LMG 22485 / NCIMB 9086 / R18194 / 383) protein is Malate dehydrogenase.